The primary structure comprises 396 residues: NADH-quinone oxidoreductase subunit D (396 aa).

Belongs to the complex I 49 kDa subunit family. NDH-1 is composed of 14 different subunits. Subunits NuoB, C, D, E, F, and G constitute the peripheral sector of the complex.

It is found in the cell inner membrane. It catalyses the reaction a quinone + NADH + 5 H(+)(in) = a quinol + NAD(+) + 4 H(+)(out). Its function is as follows. NDH-1 shuttles electrons from NADH, via FMN and iron-sulfur (Fe-S) centers, to quinones in the respiratory chain. The immediate electron acceptor for the enzyme in this species is believed to be ubiquinone. Couples the redox reaction to proton translocation (for every two electrons transferred, four hydrogen ions are translocated across the cytoplasmic membrane), and thus conserves the redox energy in a proton gradient. This chain is NADH-quinone oxidoreductase subunit D, found in Methylorubrum populi (strain ATCC BAA-705 / NCIMB 13946 / BJ001) (Methylobacterium populi).